The primary structure comprises 1016 residues: Coiled-coil domain-containing protein 57 (1016 aa).

The segment at 1 to 503 (MLPLCSEREL…HGLLPGQEAQ (503 aa)) is centrosomal targeting domain. Coiled-coil stretches lie at residues 14–607 (LARK…PVKT), 676–700 (SEVD…KHLK), and 748–775 (VTHL…LLEM). Disordered stretches follow at residues 500 to 519 (QEAQ…DSPS) and 549 to 573 (HLPP…DSTP). The tract at residues 604–1016 (PVKTSVATAD…SRIRNYNLKD (413 aa)) is microtubule binding domain. Disordered regions lie at residues 781-921 (AEQG…LASS) and 933-1016 (GSSP…NLKD). Composition is skewed to polar residues over residues 846-859 (QPHS…TNTP) and 934-945 (SSPSGVPSQDNS).

As to quaternary structure, interacts with CEP63; the interaction is required for their location to proximal end of centrioles. Interacts with microtubules.

Its subcellular location is the cytoplasm. It is found in the cytoskeleton. It localises to the microtubule organizing center. The protein localises to the centrosome. The protein resides in the centriolar satellite. Its subcellular location is the centriole. It is found in the spindle. Pleiotropic regulator of centriole duplication, mitosis, and ciliogenesis. Critical interface between centrosome and microtubule-mediated cellular processes. Centriole duplication protein required for recruitment of CEP63, CEP152, and PLK4 to the centrosome. Independent of its centrosomal targeting, localizes to and interacts with microtubules and regulates microtubule nucleation, stability, and mitotic progression. The protein is Coiled-coil domain-containing protein 57 of Mus musculus (Mouse).